A 357-amino-acid polypeptide reads, in one-letter code: NADH-quinone oxidoreductase subunit H (357 aa).

The next 8 helical transmembrane spans lie at 18–38, 92–112, 127–147, 165–185, 206–226, 268–288, 294–314, and 329–349; these read VAWMVVWSLVKIVVIAVPIIL, VLFVVAPVVTLMPALAAWAVV, LLYIMAITSIGVYGVIVAGWA, VSYELAIGFVLVSVLLVSGSL, FLSWNWLPLLPLFIIYVISAV, ILLSCMAAIMFLGGWMSPIDI, IPGWIWLGIKTFCVVSMFVWF, and LGWKIFIPLTGVWLVVLAIWM.

The protein belongs to the complex I subunit 1 family. In terms of assembly, NDH-1 is composed of 14 different subunits. Subunits NuoA, H, J, K, L, M, N constitute the membrane sector of the complex.

Its subcellular location is the cell inner membrane. It catalyses the reaction a quinone + NADH + 5 H(+)(in) = a quinol + NAD(+) + 4 H(+)(out). Its function is as follows. NDH-1 shuttles electrons from NADH, via FMN and iron-sulfur (Fe-S) centers, to quinones in the respiratory chain. The immediate electron acceptor for the enzyme in this species is believed to be ubiquinone. Couples the redox reaction to proton translocation (for every two electrons transferred, four hydrogen ions are translocated across the cytoplasmic membrane), and thus conserves the redox energy in a proton gradient. This subunit may bind ubiquinone. This chain is NADH-quinone oxidoreductase subunit H, found in Bordetella bronchiseptica (strain ATCC BAA-588 / NCTC 13252 / RB50) (Alcaligenes bronchisepticus).